Reading from the N-terminus, the 753-residue chain is ATPase family gene 2 protein homolog B (753 aa).

Residue M1 is modified to N-acetylmethionine. The tract at residues 1-189 is required for interaction with AFG2A and CINP; sequence MAPDSDPFPE…PRTRVSLGGE (189 aa). The tract at residues 171 to 203 is disordered; that stretch reads SPDPAGLVTPRTRVSLGGEPPSEAQPQPEVPLG. Residues 241-248 and 505-512 contribute to the ATP site; these read GPPGVGKT and GPPGCAKT.

This sequence belongs to the AAA ATPase family. AFG2 subfamily. In terms of assembly, part of the 55LCC heterohexameric ATPase complex composed at least of AIRIM, AFG2A, AFG2B and CINP. Associates with pre-60S ribosomal particles. Expressed in both neurons and glia during embryonic and adult stages of brain development.

It localises to the cytoplasm. The protein resides in the cytoskeleton. Its subcellular location is the spindle. It is found in the nucleus. It catalyses the reaction ATP + H2O = ADP + phosphate + H(+). Its activity is regulated as follows. In the context of 55LCC heterohexameric ATPase complex, the ATPase activity is stimulated by DNA binding and inhibited in presence of RNA. Functionally, ATP-dependent chaperone part of the 55LCC heterohexameric ATPase complex which is chromatin-associated and promotes replisome proteostasis to maintain replication fork progression and genome stability. Required for replication fork progression, sister chromatid cohesion, and chromosome stability. The ATPase activity is specifically enhanced by replication fork DNA and is coupled to cysteine protease-dependent cleavage of replisome substrates in response to replication fork damage. Uses ATPase activity to process replisome substrates in S-phase, facilitating their proteolytic turnover from chromatin to ensure DNA replication and mitotic fidelity. Plays an essential role in the cytoplasmic maturation steps of pre-60S ribosomal particles by promoting the release of shuttling protein RSL24D1/RLP24 from the pre-ribosomal particles. This chain is ATPase family gene 2 protein homolog B, found in Homo sapiens (Human).